A 416-amino-acid chain; its full sequence is MGESPDFISDLPQSIIENILTRLSIRDAIRTSVLSSKWRYKWSTLTDLVFDEKCVSPSNDRCVVETNLVRFITGVLLLHQGPIHKFQLSTSFKQCRPDIDQWLLFLSRNGIKELVLKLGEGEFRVPACLFNCLKLTCLELCHCEFDPPQYFKGFSYLKSLNLHQILVAPEVIESLISGCPLLEFLSLSYFDSLVLSISAPNLMYLYLDGEFKDIFLENTPKLVAISVSMYMHEDVTDFEQSSDYNLVKFLGGVPLLEKLVGYIYFTKYLSIGDDPGRLPLTYIHLKTIELYQVCFEDADEVLVLLRLVTHSPNLKELKVSASPVQPFPLEEEGFDLFERDYFDYKLPSLESVKITDASGIRYELEFIRFLLGTSPVLETVTVSSSLSDKDAKMDMVIELLRYPRVSPRAQLLFLQD.

The F-box domain occupies Pro5–Lys53. LRR repeat units follow at residues Val115–His142, Gln164–Tyr189, Met203–Met229, Phe238–Ile263, and Cys294–Ala321. The region spanning Leu346–Ser384 is the FBD domain.

In Arabidopsis thaliana (Mouse-ear cress), this protein is F-box/FBD/LRR-repeat protein At1g13570.